The primary structure comprises 371 residues: 4-hydroxy-3-methylbut-2-en-1-yl diphosphate synthase (flavodoxin) (371 aa).

[4Fe-4S] cluster contacts are provided by cysteine 270, cysteine 273, cysteine 305, and glutamate 312.

The protein belongs to the IspG family. It depends on [4Fe-4S] cluster as a cofactor.

The enzyme catalyses (2E)-4-hydroxy-3-methylbut-2-enyl diphosphate + oxidized [flavodoxin] + H2O + 2 H(+) = 2-C-methyl-D-erythritol 2,4-cyclic diphosphate + reduced [flavodoxin]. Its pathway is isoprenoid biosynthesis; isopentenyl diphosphate biosynthesis via DXP pathway; isopentenyl diphosphate from 1-deoxy-D-xylulose 5-phosphate: step 5/6. Converts 2C-methyl-D-erythritol 2,4-cyclodiphosphate (ME-2,4cPP) into 1-hydroxy-2-methyl-2-(E)-butenyl 4-diphosphate. The sequence is that of 4-hydroxy-3-methylbut-2-en-1-yl diphosphate synthase (flavodoxin) from Shewanella sediminis (strain HAW-EB3).